The chain runs to 656 residues: MIKSQKEYLERIEYLNTLSHHYYNLDDSIVSDAVYDELYQELKAYEGKNPNSIQANSPTQKVGATTPNSFNKNPHLMRMWSLDDVFNQSELQAWLQRILKAYPSASFVCSPKLDGVSLNLLYQHGKLVKATTRGNGLEGELVSANAKHIANIPHAIAYNGEIEIRGEVIISKKDFDALNKERLNANEPLFANPRNAASGSLRQLDSEITKKRKLQFIPWGVGKHSLNFISFKECLDFIVSLGFSAIQYLSLNKNHQEIEENYHTLIKEREGFFALLDGMVIVVNELNIQKELGYTQKSPKFACAYKFPALEKHTKIVGIINQVGRSGAITPVAVLEPVEIAGAIITKATLHNYSEIEKKNIMLNDRVVVIRSGDVIPKIIKPLESYRDGSQHKIERPKVCPICSHELLCEEIFTYCQNLNCPARLKESLIHFASKDALNIQGLGDKVIEQLFEEKLIFNALDLYALKLEDLMRLDKFKIKKAQNLLDAIQKSKNPPLWRLINALGIEHIGKGASKTLARYGLNVLEKSEAEFLEMEGFGVEMARSLVNFYASNQEFIRSLFDLLNPKNSDMAEEKQESSSVFSNKTIVLTGTLSKPRQEYAQMLENLGAKISSSVSAKTDFLIVGENAGSKLALAKKHGVSVLNEEELLKRLKEFD.

Residues 32–36 (DAVYD) and 81–82 (SL) contribute to the NAD(+) site. The active-site N6-AMP-lysine intermediate is lysine 112. Positions 133, 167, and 306 each coordinate NAD(+). Zn(2+) is bound by residues cysteine 400, cysteine 403, cysteine 416, and cysteine 421. The BRCT domain occupies 577 to 656 (ESSSVFSNKT…ELLKRLKEFD (80 aa)).

It belongs to the NAD-dependent DNA ligase family. LigA subfamily. Mg(2+) serves as cofactor. Requires Mn(2+) as cofactor.

The enzyme catalyses NAD(+) + (deoxyribonucleotide)n-3'-hydroxyl + 5'-phospho-(deoxyribonucleotide)m = (deoxyribonucleotide)n+m + AMP + beta-nicotinamide D-nucleotide.. DNA ligase that catalyzes the formation of phosphodiester linkages between 5'-phosphoryl and 3'-hydroxyl groups in double-stranded DNA using NAD as a coenzyme and as the energy source for the reaction. It is essential for DNA replication and repair of damaged DNA. In Helicobacter pylori (strain Shi470), this protein is DNA ligase.